We begin with the raw amino-acid sequence, 158 residues long: Transcription elongation factor GreA (158 aa).

The protein belongs to the GreA/GreB family.

Necessary for efficient RNA polymerase transcription elongation past template-encoded arresting sites. The arresting sites in DNA have the property of trapping a certain fraction of elongating RNA polymerases that pass through, resulting in locked ternary complexes. Cleavage of the nascent transcript by cleavage factors such as GreA or GreB allows the resumption of elongation from the new 3'terminus. GreA releases sequences of 2 to 3 nucleotides. This chain is Transcription elongation factor GreA, found in Acinetobacter baumannii (strain SDF).